Consider the following 333-residue polypeptide: Gap junction alpha-4 protein (333 aa).

Residues Met1–Val20 are Cytoplasmic-facing. A helical transmembrane segment spans residues Val21–Ala40. The Extracellular portion of the chain corresponds to Gly41–Arg76. A helical membrane pass occupies residues Tyr77–Leu99. Topologically, residues Ser100–Arg148 are cytoplasmic. The helical transmembrane segment at Gly149–Leu165 threads the bilayer. Residues Glu166 to Thr207 are Extracellular-facing. The chain crosses the membrane as a helical span at residues Ile208–His230. Over Leu231–Val333 the chain is Cytoplasmic. Residues Ala292–Val333 form a disordered region. A compositionally biased stretch (low complexity) spans Pro323 to Val333.

It belongs to the connexin family. Alpha-type (group II) subfamily. In terms of assembly, a connexon is composed of a hexamer of connexins. In terms of tissue distribution, expressed in multiple organs and tissues, including heart, uterus, ovary, and blood vessel endothelium.

The protein resides in the cell membrane. Its subcellular location is the cell junction. It localises to the gap junction. One gap junction consists of a cluster of closely packed pairs of transmembrane channels, the connexons, through which materials of low MW diffuse from one cell to a neighboring cell. In Homo sapiens (Human), this protein is Gap junction alpha-4 protein (GJA4).